The following is a 558-amino-acid chain: Glucose-6-phosphate isomerase (558 aa).

Position 2 is an N-acetylalanine (alanine 2). The residue at position 12 (lysine 12) is an N6-acetyllysine. Lysine 34 bears the N6-(2-hydroxyisobutyryl)lysine mark. Serine 107 carries the phosphoserine modification. Phosphothreonine is present on threonine 109. Lysine 142 is modified (N6-acetyllysine). 159–160 (GS) is a D-glucose 6-phosphate binding site. Serine 185 carries the phosphoserine; by CK2 modification. 210 to 215 (SKTFTT) provides a ligand contact to D-glucose 6-phosphate. Residue threonine 250 is modified to Phosphothreonine. Residues glutamine 354, glutamate 358, and histidine 389 each coordinate D-glucose 6-phosphate. Glutamate 358 acts as the Proton donor in catalysis. Histidine 389 is a catalytic residue. Residue lysine 454 is modified to N6-acetyllysine; alternate. Lysine 454 carries the N6-malonyllysine; alternate modification. Lysine 454 is modified (N6-succinyllysine; alternate). At serine 455 the chain carries Phosphoserine. Lysine 519 lines the D-glucose 6-phosphate pocket. Residue lysine 519 is part of the active site.

Belongs to the GPI family. In terms of assembly, homodimer; in the catalytically active form. Monomer in the secreted form. In terms of processing, phosphorylation at Ser-185 by CK2 has been shown to decrease enzymatic activity and may contribute to secretion by a non-classical secretory pathway. ISGylated.

The protein localises to the cytoplasm. It is found in the secreted. It catalyses the reaction alpha-D-glucose 6-phosphate = beta-D-fructose 6-phosphate. Its pathway is carbohydrate degradation; glycolysis; D-glyceraldehyde 3-phosphate and glycerone phosphate from D-glucose: step 2/4. In terms of biological role, in the cytoplasm, catalyzes the conversion of glucose-6-phosphate to fructose-6-phosphate, the second step in glycolysis, and the reverse reaction during gluconeogenesis. Besides it's role as a glycolytic enzyme, also acts as a secreted cytokine: acts as an angiogenic factor (AMF) that stimulates endothelial cell motility. Acts as a neurotrophic factor, neuroleukin, for spinal and sensory neurons. It is secreted by lectin-stimulated T-cells and induces immunoglobulin secretion. The chain is Glucose-6-phosphate isomerase from Macaca fascicularis (Crab-eating macaque).